Consider the following 168-residue polypeptide: Gastrula zinc finger protein XlCGF7.1 (168 aa).

6 consecutive C2H2-type zinc fingers follow at residues 6-28 (FTCTECGKGFSDKSNLRSHQRTH), 34-56 (FTCTECGKSFSQKIGLHNHLKCH), 62-84 (FMCTECGKSFSNKSNLHTHRKIH), 90-112 (YICTECGKTFPRKKNLQSHQTVH), 118-140 (FTCSECGKCFSQKKNLHTHQKIH), and 146-168 (FKCNECGQAFLRKRNLLSHERIH).

Belongs to the krueppel C2H2-type zinc-finger protein family.

It is found in the nucleus. In terms of biological role, may be involved in transcriptional regulation. The protein is Gastrula zinc finger protein XlCGF7.1 of Xenopus laevis (African clawed frog).